The primary structure comprises 485 residues: Probable aspartic-type endopeptidase opsB (485 aa).

The first 20 residues, 1–20, serve as a signal peptide directing secretion; the sequence is MRHIFSLLSIVCLMVKHGAC. The Peptidase A1 domain occupies 69-397; that stretch reads YFCNVTLGTP…DIANNEISIA (329 aa). An N-linked (GlcNAc...) asparagine glycan is attached at asparagine 72. The active site involves aspartate 87. N-linked (GlcNAc...) asparagine glycosylation is found at asparagine 99, asparagine 107, asparagine 111, and asparagine 132. The active site involves aspartate 285. 3 N-linked (GlcNAc...) asparagine glycosylation sites follow: asparagine 328, asparagine 337, and asparagine 402. A lipid anchor (GPI-anchor amidated serine) is attached at serine 461. The propeptide at 462 to 485 is removed in mature form; it reads AGVARADKQYLAIALIAVWFVLGL.

The protein belongs to the peptidase A1 family.

It is found in the cell membrane. Probable GPI-anchored aspartic-type endopeptidase which contributes to virulence. In Aspergillus fumigatus (strain ATCC MYA-4609 / CBS 101355 / FGSC A1100 / Af293) (Neosartorya fumigata), this protein is Probable aspartic-type endopeptidase opsB (opsB).